We begin with the raw amino-acid sequence, 342 residues long: GTPase Obg (342 aa).

The region spanning 1–159 (MKFLDEAKVY…MWIWLRLKLI (159 aa)) is the Obg domain. Residues 160 to 327 (ADAGLVGLPN…ALRALQTEID (168 aa)) enclose the OBG-type G domain. Residues 166-173 (GLPNAGKS), 191-195 (FTTLH), 212-215 (DIPG), 279-282 (SKAD), and 308-310 (SSA) each bind GTP. Residues S173 and T193 each contribute to the Mg(2+) site.

Belongs to the TRAFAC class OBG-HflX-like GTPase superfamily. OBG GTPase family. Monomer. Requires Mg(2+) as cofactor.

Its subcellular location is the cytoplasm. Functionally, an essential GTPase which binds GTP, GDP and possibly (p)ppGpp with moderate affinity, with high nucleotide exchange rates and a fairly low GTP hydrolysis rate. Plays a role in control of the cell cycle, stress response, ribosome biogenesis and in those bacteria that undergo differentiation, in morphogenesis control. This Methylobacterium radiotolerans (strain ATCC 27329 / DSM 1819 / JCM 2831 / NBRC 15690 / NCIMB 10815 / 0-1) protein is GTPase Obg.